A 151-amino-acid chain; its full sequence is Ribosome maturation factor RimP (151 aa).

This sequence belongs to the RimP family.

It is found in the cytoplasm. Its function is as follows. Required for maturation of 30S ribosomal subunits. The chain is Ribosome maturation factor RimP from Mannheimia succiniciproducens (strain KCTC 0769BP / MBEL55E).